The primary structure comprises 568 residues: Calcium-dependent protein kinase 5 (568 aa).

Residues 125-379 (EIDRYKLGKG…VEQVLKHRWF (255 aa)) enclose the Protein kinase domain. Residues 131–139 (LGKGSYGNV) and Lys-154 each bind ATP. Asp-245 (proton acceptor) is an active-site residue. The J domain autoinhibitory motif motif lies at 400 to 408 (KFKEFHKLC). Residues 400-435 (KFKEFHKLCKIKKLAVTCIAYQLNEKDIGKLKKTFE) form a j domain region. The J domain EF-hand interaction motif motif lies at 409–418 (KIKKLAVTCI). EF-hand domains are found at residues 425-460 (KDIG…NDNE), 462-495 (DREL…HSIF), 496-531 (QQDV…SAVQ), and 534-568 (FSKE…GVKE). Residues Asp-438, Asn-440, Asp-442, Glu-449, Asp-473, Asp-475, Asn-477, Glu-484, Asp-509, Asp-511, Asp-513, Glu-520, Asp-547, Asn-549, Asp-551, and Glu-558 each coordinate Ca(2+).

The protein belongs to the protein kinase superfamily. Ser/Thr protein kinase family. CDPK subfamily. Requires Mg(2+) as cofactor. May be palmitoylated. Post-translationally, autophosphorylated in vitro.

Its subcellular location is the cytoplasm. The protein resides in the cytoplasmic vesicle. It is found in the secretory vesicle. The protein localises to the microneme membrane. It localises to the cell membrane. It catalyses the reaction L-seryl-[protein] + ATP = O-phospho-L-seryl-[protein] + ADP + H(+). The catalysed reaction is L-threonyl-[protein] + ATP = O-phospho-L-threonyl-[protein] + ADP + H(+). Its activity is regulated as follows. Activated by calcium. Upon calcium binding to the EF-hand domains, the C-terminus of the junction domain (J domain) undergoes a conformational change which results in the dissociation of the pseudo-substrate inhibitory motif from the catalytic domain. This, in turn, may facilitate the autophosphorylation of the activation loop at Thr-285, which leads to the kinase activation. Calcium-dependent protein kinase which acts as a sensor and effector of intracellular Ca(2+) levels probably in part downstream of cGMP-activated PKG kinase. Plays a central role in host erythrocytes and hepatocytes infection cycles. During the liver stage, involved in sporozoite motility and thus in sporozoite invasion of host hepatocytes, probably together with CDPK1 and CDPK4. Involved in merosome egress from host hepatocytes, probably together with CDPK4. Required for the release of hepatic merozoites from merosomes in the host blood stream. During the asexual blood stage, required for merozoite egress from host erythrocytes by triggering microneme secretion. Phosphorylates transporter NPT1 at late schizont stage. The chain is Calcium-dependent protein kinase 5 from Plasmodium falciparum (isolate 3D7).